A 39-amino-acid chain; its full sequence is Photosystem II reaction center protein J (39 aa).

Residues 9–29 (LWLVVTFGGIVVLTVLGIFIY) form a helical membrane-spanning segment.

The protein belongs to the PsbJ family. In terms of assembly, PSII is composed of 1 copy each of membrane proteins PsbA, PsbB, PsbC, PsbD, PsbE, PsbF, PsbH, PsbI, PsbJ, PsbK, PsbL, PsbM, PsbT, PsbY, PsbZ, Psb30/Ycf12, at least 3 peripheral proteins of the oxygen-evolving complex and a large number of cofactors. It forms dimeric complexes.

Its subcellular location is the plastid. The protein localises to the chloroplast thylakoid membrane. Its function is as follows. One of the components of the core complex of photosystem II (PSII). PSII is a light-driven water:plastoquinone oxidoreductase that uses light energy to abstract electrons from H(2)O, generating O(2) and a proton gradient subsequently used for ATP formation. It consists of a core antenna complex that captures photons, and an electron transfer chain that converts photonic excitation into a charge separation. In Cyanidium caldarium (Red alga), this protein is Photosystem II reaction center protein J.